We begin with the raw amino-acid sequence, 142 residues long: Large ribosomal subunit protein uL11 (142 aa).

The protein belongs to the universal ribosomal protein uL11 family. In terms of assembly, part of the ribosomal stalk of the 50S ribosomal subunit. Interacts with L10 and the large rRNA to form the base of the stalk. L10 forms an elongated spine to which L12 dimers bind in a sequential fashion forming a multimeric L10(L12)X complex. One or more lysine residues are methylated.

Its function is as follows. Forms part of the ribosomal stalk which helps the ribosome interact with GTP-bound translation factors. This Shewanella sp. (strain ANA-3) protein is Large ribosomal subunit protein uL11.